The primary structure comprises 681 residues: U3 small nucleolar ribonucleoprotein protein MPP10 (681 aa).

3 positions are modified to phosphoserine: Ser61, Ser120, and Ser140. Residues 109–139 adopt a coiled-coil conformation; the sequence is ECEDEECEEDASEVEADNQENLETDLDEEQL. Over residues 111 to 144 the composition is skewed to acidic residues; it reads EDEECEEDASEVEADNQENLETDLDEEQLSDEGG. Disordered stretches follow at residues 111–202, 215–256, and 268–365; these read EDEE…SVVD, LEKV…GRQK, and YKDF…EKRQ. Residues 145 to 163 are compositionally biased toward basic and acidic residues; sequence DVPKGRDRAKSSRKSDPRK. Phosphoserine is present on residues Ser164, Ser168, and Ser172. Basic and acidic residues predominate over residues 215 to 227; sequence LEKVEKEEEKRPD. 2 stretches are compositionally biased toward acidic residues: residues 228–248 and 273–322; these read GEEE…DESE and DPVE…EDEN. Ser244, Ser247, Ser277, and Ser346 each carry phosphoserine. A coiled-coil region spans residues 349–383; sequence AVKQESDEVKSSFEKRQEKMNEKIASLEKELLDKK. A Glycyl lysine isopeptide (Lys-Gly) (interchain with G-Cter in SUMO2) cross-link involves residue Lys351. Basic and acidic residues predominate over residues 352–365; that stretch reads QESDEVKSSFEKRQ. Residues Lys383 and Lys395 each participate in a glycyl lysine isopeptide (Lys-Gly) (interchain with G-Cter in SUMO2) cross-link. The stretch at 471-491 forms a coiled coil; the sequence is AEIYEQEYLKLNQQKTEEEDN. Residue Lys556 forms a Glycyl lysine isopeptide (Lys-Gly) (interchain with G-Cter in SUMO2) linkage. Basic and acidic residues predominate over residues 560-576; the sequence is KAGDLKTAAEKTATDKK. The segment at 560–644 is disordered; the sequence is KAGDLKTAAE…RKDKPLKSSQ (85 aa). Positions 575 to 604 form a coiled coil; sequence KKRERRKKKYQKRLKIKEKEKRKKLLEKNN. Over residues 577–599 the composition is skewed to basic residues; the sequence is RERRKKKYQKRLKIKEKEKRKKL. An N6-acetyllysine modification is found at Lys609. Positions 630-640 are enriched in basic and acidic residues; sequence LLKDERKDKPL. Residues Lys632 and Lys649 each participate in a glycyl lysine isopeptide (Lys-Gly) (interchain with G-Cter in SUMO2) cross-link. The segment at 657-681 is disordered; it reads QINDAKQPEKIKKKKQDISVHKLKL. Over residues 662 to 681 the composition is skewed to basic and acidic residues; it reads KQPEKIKKKKQDISVHKLKL.

This sequence belongs to the MPP10 family. In terms of assembly, part of the small subunit (SSU) processome, composed of more than 70 proteins and the RNA chaperone small nucleolar RNA (snoRNA) U3. Component of a heterotrimeric complex containing IMP3, IMP4 and MPHOSPH10. Interacts with IMP3 and IMP4. In terms of processing, phosphorylated in M (mitotic) phase.

It localises to the nucleus. It is found in the nucleolus. The protein resides in the chromosome. Component of the 60-80S U3 small nucleolar ribonucleoprotein (U3 snoRNP). Required for the early cleavages during pre-18S ribosomal RNA processing. Part of the small subunit (SSU) processome, first precursor of the small eukaryotic ribosomal subunit. During the assembly of the SSU processome in the nucleolus, many ribosome biogenesis factors, an RNA chaperone and ribosomal proteins associate with the nascent pre-rRNA and work in concert to generate RNA folding, modifications, rearrangements and cleavage as well as targeted degradation of pre-ribosomal RNA by the RNA exosome. This Mus musculus (Mouse) protein is U3 small nucleolar ribonucleoprotein protein MPP10 (Mphosph10).